The sequence spans 128 residues: Putative pre-16S rRNA nuclease (128 aa).

This sequence belongs to the YqgF nuclease family.

The protein localises to the cytoplasm. Its function is as follows. Could be a nuclease involved in processing of the 5'-end of pre-16S rRNA. In Campylobacter lari (strain RM2100 / D67 / ATCC BAA-1060), this protein is Putative pre-16S rRNA nuclease.